The sequence spans 64 residues: Conotoxin Ca5.3 (64 aa).

A signal peptide spans 1–22; it reads MRCVPVFIILLLLIASAPGVDA. A propeptide spanning residues 23–48 is cleaved from the precursor; the sequence is QPKTKYNAPLTSLHDNAKGILQEHWN. Ile61 is subject to Isoleucine amide.

It belongs to the conotoxin T superfamily. In terms of processing, contains 2 disulfide bonds that can be either 'C1-C3, C2-C4' or 'C1-C4, C2-C3', since these disulfide connectivities have been observed for conotoxins with cysteine framework V (for examples, see AC P0DQQ7 and AC P81755). In terms of tissue distribution, expressed by the venom duct.

The protein resides in the secreted. The protein is Conotoxin Ca5.3 of Conus caracteristicus (Characteristic cone).